A 386-amino-acid chain; its full sequence is Caspase-12 (386 aa).

The region spanning 1-91 is the CARD domain; that stretch reads MAGKRQSQDP…LLSLKSHAEN (91 aa). A Phosphoserine modification is found at serine 84. Residues histidine 218 and cysteine 266 contribute to the active site.

Belongs to the peptidase C14A family. As to quaternary structure, heterotetramer that consists of two anti-parallel arranged heterodimers, each one formed by two subunits (Potential). May interact with TRAF2.

Involved in the activation cascade of caspases responsible for apoptosis execution. This chain is Caspase-12, found in Canis lupus familiaris (Dog).